The sequence spans 246 residues: Small ribosomal subunit protein uS2 (246 aa).

The protein belongs to the universal ribosomal protein uS2 family.

The protein is Small ribosomal subunit protein uS2 of Burkholderia thailandensis (strain ATCC 700388 / DSM 13276 / CCUG 48851 / CIP 106301 / E264).